A 205-amino-acid chain; its full sequence is Protein N-terminal glutamine amidohydrolase (205 aa).

Catalysis depends on residues cysteine 20, histidine 74, and aspartate 90.

This sequence belongs to the NTAQ1 family. Monomer.

The enzyme catalyses N-terminal L-glutaminyl-[protein] + H2O = N-terminal L-glutamyl-[protein] + NH4(+). Its function is as follows. Mediates the side-chain deamidation of N-terminal glutamine residues to glutamate, an important step in N-end rule pathway of protein degradation. Conversion of the resulting N-terminal glutamine to glutamate renders the protein susceptible to arginylation, polyubiquitination and degradation as specified by the N-end rule. Does not act on substrates with internal or C-terminal glutamine and does not act on non-glutamine residues in any position. The polypeptide is Protein N-terminal glutamine amidohydrolase (tun) (Drosophila erecta (Fruit fly)).